Here is a 366-residue protein sequence, read N- to C-terminus: Cobalt-precorrin-5B C(1)-methyltransferase (366 aa).

It belongs to the CbiD family.

It catalyses the reaction Co-precorrin-5B + S-adenosyl-L-methionine = Co-precorrin-6A + S-adenosyl-L-homocysteine. The protein operates within cofactor biosynthesis; adenosylcobalamin biosynthesis; cob(II)yrinate a,c-diamide from sirohydrochlorin (anaerobic route): step 6/10. Its function is as follows. Catalyzes the methylation of C-1 in cobalt-precorrin-5B to form cobalt-precorrin-6A. This Pseudomonas aeruginosa (strain LESB58) protein is Cobalt-precorrin-5B C(1)-methyltransferase.